The following is a 265-amino-acid chain: Basic leucine zipper 6 (265 aa).

Disordered stretches follow at residues 1-24 (MAQLPPKIPVAAPGHHQHWASAGG) and 77-139 (LMSM…RDPK). Over residues 85–97 (GGSSAPGSDNGGS) the composition is skewed to low complexity. The segment covering 122 to 132 (TQEQAAATSPT) has biased composition (polar residues). The bZIP domain occupies 137–189 (DPKRVKRILANRQSAQRSRVRKLQYISELERSVTTLQNEVSVLSPRVAFLDQQ). A basic motif region spans residues 139–158 (KRVKRILANRQSAQRSRVRK). The interval 165-186 (LERSVTTLQNEVSVLSPRVAFL) is leucine-zipper. The tract at residues 239-265 (LSGGLAADHAHVHGGPPPVRAEKELMS) is disordered.

Expressed in roots, shoots and panicles.

The protein localises to the nucleus. In terms of biological role, transcription regulator. This Oryza sativa subsp. japonica (Rice) protein is Basic leucine zipper 6 (BZIP06).